The sequence spans 332 residues: DNA-directed RNA polymerase subunit alpha (332 aa).

Residues 1 to 234 are alpha N-terminal domain (alpha-NTD); sequence MIEYVIPKKL…NHLQIITDSL (234 aa). Positions 264-332 are alpha C-terminal domain (alpha-CTD); it reads AVYSKKIDEL…KFGLSLKKGG (69 aa).

Belongs to the RNA polymerase alpha chain family. Homodimer. The RNAP catalytic core consists of 2 alpha, 1 beta, 1 beta' and 1 omega subunit. When a sigma factor is associated with the core the holoenzyme is formed, which can initiate transcription.

It carries out the reaction RNA(n) + a ribonucleoside 5'-triphosphate = RNA(n+1) + diphosphate. DNA-dependent RNA polymerase catalyzes the transcription of DNA into RNA using the four ribonucleoside triphosphates as substrates. The polypeptide is DNA-directed RNA polymerase subunit alpha (Pseudothermotoga lettingae (strain ATCC BAA-301 / DSM 14385 / NBRC 107922 / TMO) (Thermotoga lettingae)).